A 946-amino-acid polypeptide reads, in one-letter code: Bifunctional glutamine synthetase adenylyltransferase/adenylyl-removing enzyme (946 aa).

The adenylyl removase stretch occupies residues 1-440; sequence MKPLSSPLQQ…VFNELIGDDE (440 aa). Residues 449 to 946 form an adenylyl transferase region; it reads SEQWRELWQD…ASWQKWLVEE (498 aa).

This sequence belongs to the GlnE family. It depends on Mg(2+) as a cofactor.

It carries out the reaction [glutamine synthetase]-O(4)-(5'-adenylyl)-L-tyrosine + phosphate = [glutamine synthetase]-L-tyrosine + ADP. The catalysed reaction is [glutamine synthetase]-L-tyrosine + ATP = [glutamine synthetase]-O(4)-(5'-adenylyl)-L-tyrosine + diphosphate. Involved in the regulation of glutamine synthetase GlnA, a key enzyme in the process to assimilate ammonia. When cellular nitrogen levels are high, the C-terminal adenylyl transferase (AT) inactivates GlnA by covalent transfer of an adenylyl group from ATP to specific tyrosine residue of GlnA, thus reducing its activity. Conversely, when nitrogen levels are low, the N-terminal adenylyl removase (AR) activates GlnA by removing the adenylyl group by phosphorolysis, increasing its activity. The regulatory region of GlnE binds the signal transduction protein PII (GlnB) which indicates the nitrogen status of the cell. This is Bifunctional glutamine synthetase adenylyltransferase/adenylyl-removing enzyme from Escherichia coli (strain K12 / MC4100 / BW2952).